The primary structure comprises 275 residues: Large ribosomal subunit protein uL2c (275 aa).

Disordered stretches follow at residues 29–60 (PEKS…GHKR) and 225–252 (MNPV…PWGH). The segment covering 51 to 60 (SRHRGGGHKR) has biased composition (basic residues).

It belongs to the universal ribosomal protein uL2 family. In terms of assembly, part of the 50S ribosomal subunit.

The protein localises to the plastid. Its subcellular location is the chloroplast. This Chlorokybus atmophyticus (Soil alga) protein is Large ribosomal subunit protein uL2c (rpl2).